We begin with the raw amino-acid sequence, 249 residues long: Selenoprotein BthD (249 aa).

The segment at 1–22 is disordered; sequence MPPKRNKKAEAPIAERDAGEEL. Over residues 8 to 19 the composition is skewed to basic and acidic residues; that stretch reads KAEAPIAERDAG. The cysteinyl-selenocysteine (Cys-Sec); redox-active cross-link spans 34–37; sequence CRSU. Position 37 (selenocysteine 37) is a non-standard amino acid, selenocysteine. The disordered stretch occupies residues 122–249; it reads QQESKEQTNT…EATAGAKRRR (128 aa). Serine 147 bears the Phosphoserine mark. Residues 175–198 show a composition bias toward basic and acidic residues; that stretch reads EQKSEEEPTQVDSKEAKQSKELVK. Residues 199–210 show a composition bias toward basic residues; the sequence is TKRQPKAQKKQA.

As to expression, expressed in the developing salivary gland at late stages of embryogenesis. Also expressed in brain, neuroblast and wing disk.

It localises to the cytoplasm. It is found in the secreted. Its function is as follows. May be involved in a redox-related process. Required for survival and specifically for salivary gland morphogenesis. This chain is Selenoprotein BthD (BthD), found in Drosophila melanogaster (Fruit fly).